A 154-amino-acid chain; its full sequence is Neurotrophin-3 (154 aa).

The first 18 residues, 1-18 (MSILFYVMFLAYLRGVQG), serve as a signal peptide directing secretion. Positions 19 to 134 (NSMDQRSLPE…VNSRSPRRKR (116 aa)) are excised as a propeptide.

It belongs to the NGF-beta family.

The protein localises to the secreted. Seems to promote the survival of visceral and proprioceptive sensory neurons. This chain is Neurotrophin-3 (NTF3), found in Cervus elaphus (Red deer).